A 330-amino-acid chain; its full sequence is Autoinducer 2 import system permease protein LsrD (330 aa).

Topologically, residues 1 to 4 are cytoplasmic; that stretch reads MRIR. Residues 5–25 form a helical membrane-spanning segment; the sequence is YGWELALAALLVIEIVSFGAI. Residues 26–42 are Periplasmic-facing; that stretch reads NPRMLDLNMLLFSTSDF. A helical membrane pass occupies residues 43-63; sequence ICIGIVALPLTMVIVSGGIDI. Residues 64–67 are Cytoplasmic-facing; it reads SFGS. A run of 2 helical transmembrane segments spans residues 68–88 and 89–109; these read TIGL…PMPL and AILL…GLII. The Cytoplasmic segment spans residues 110 to 115; that stretch reads YTKVNP. A helical transmembrane segment spans residues 116 to 136; the sequence is LVITLGTLYLFAGSALLLSGM. The Periplasmic segment spans residues 137 to 159; it reads AGATGYEGIGGFPMAFTDFANLD. A helical membrane pass occupies residues 160–180; it reads VLGLPVPLIIFLICLLVFWLW. Topologically, residues 181–209 are cytoplasmic; it reads LHKTHAGRNVFLIGQSPRVALYSAIPVNR. A helical transmembrane segment spans residues 210-230; sequence TLCALYAMTGLASAVAAVLLV. The Periplasmic segment spans residues 231–237; sequence SYFGSAR. The next 2 membrane-spanning stretches (helical) occupy residues 238 to 258 and 259 to 279; these read SDLG…GGAN and IYGG…VGYL. The Periplasmic segment spans residues 280-285; that stretch reads QQGLQM. Residues 286 to 306 traverse the membrane as a helical segment; sequence AGVPNQVSSALSGALLIVVVV. The Cytoplasmic portion of the chain corresponds to 307-330; it reads GRSVSLHRQQIKEWLARRANNPLP.

Belongs to the binding-protein-dependent transport system permease family. AraH/RbsC subfamily. As to quaternary structure, the complex is composed of two ATP-binding proteins (LsrA), two transmembrane proteins (LsrC and LsrD) and a solute-binding protein (LsrB).

The protein resides in the cell inner membrane. Its function is as follows. Part of the ABC transporter complex LsrABCD involved in autoinducer 2 (AI-2) import. Probably responsible for the translocation of the substrate across the membrane. The protein is Autoinducer 2 import system permease protein LsrD (lsrD) of Escherichia coli O157:H7.